A 576-amino-acid chain; its full sequence is Arginine--tRNA ligase (576 aa).

The 'HIGH' region signature appears at 126-136 (ANPTGPMHIGH).

It belongs to the class-I aminoacyl-tRNA synthetase family. In terms of assembly, monomer.

Its subcellular location is the cytoplasm. It catalyses the reaction tRNA(Arg) + L-arginine + ATP = L-arginyl-tRNA(Arg) + AMP + diphosphate. This is Arginine--tRNA ligase from Rickettsia felis (strain ATCC VR-1525 / URRWXCal2) (Rickettsia azadi).